A 161-amino-acid chain; its full sequence is Heme transporter hrg-6 (161 aa).

4 consecutive transmembrane segments (helical) span residues 13 to 33 (IAYTICGIIIGLFWACVYIFA), 38 to 58 (VALAACLTATAFAFETFYFYL), 75 to 95 (VLFWINLIVGFLSIGGMITAI), and 115 to 135 (WWSTATWFLVMLKWTWQNAFI).

It belongs to the HRG family.

The protein localises to the membrane. Its function is as follows. Heme transporter. The sequence is that of Heme transporter hrg-6 (hrg-6) from Caenorhabditis elegans.